Reading from the N-terminus, the 202-residue chain is LexA repressor (202 aa).

The H-T-H motif DNA-binding region spans 28–47; sequence IREIGDQFGITAKGAYDHLK. Active-site for autocatalytic cleavage activity residues include S126 and K163.

This sequence belongs to the peptidase S24 family. Homodimer.

It catalyses the reaction Hydrolysis of Ala-|-Gly bond in repressor LexA.. In terms of biological role, represses a number of genes involved in the response to DNA damage (SOS response), including recA and lexA. In the presence of single-stranded DNA, RecA interacts with LexA causing an autocatalytic cleavage which disrupts the DNA-binding part of LexA, leading to derepression of the SOS regulon and eventually DNA repair. The chain is LexA repressor from Leptospira biflexa serovar Patoc (strain Patoc 1 / Ames).